Reading from the N-terminus, the 440-residue chain is Protein disulfide-isomerase A6 (440 aa).

The first 19 residues, 1-19, serve as a signal peptide directing secretion; that stretch reads MALLVLGLVSCTFFLAVNG. 2 Thioredoxin domains span residues 20 to 133 and 154 to 287; these read LYSS…ALRQ and SDSS…EDIA. Residues Cys-55 and Cys-58 each act as nucleophile in the active site. Cys-55 and Cys-58 are disulfide-bonded. Position 129 is a phosphoserine (Ser-129). Residues 141-161 form a disordered region; that stretch reads GRSGGYSSGKQGRSDSSSKKD. Residues 152–161 show a composition bias toward basic and acidic residues; the sequence is GRSDSSSKKD. Ser-156 is subject to Phosphoserine; by FAM20C. Residue Ser-158 is modified to Phosphoserine. Residues Cys-190 and Cys-193 each act as nucleophile in the active site. Cys-190 and Cys-193 are joined by a disulfide. Ser-428 carries the phosphoserine modification. The short motif at 437–440 is the Prevents secretion from ER element; sequence KDEL.

This sequence belongs to the protein disulfide isomerase family. Part of a large chaperone multiprotein complex comprising DNAJB11, HSP90B1, HSPA5, HYOU, PDIA2, PDIA4, PDIA6, PPIB, SDF2L1, UGGT1 and very small amounts of ERP29, but not, or at very low levels, CALR nor CANX. Interacts with MICA on the surface of tumor cells, leading to MICA disulfide bond reduction which is required for its release from tumor cells. Interacts with ITGB3 following platelet stimulation. Interacts with ERN1; the interaction is direct. Interacts with EIF2AK3. As to expression, expressed in platelets (at protein level).

Its subcellular location is the endoplasmic reticulum lumen. The protein resides in the cell membrane. It localises to the melanosome. It carries out the reaction Catalyzes the rearrangement of -S-S- bonds in proteins.. In terms of biological role, may function as a chaperone that inhibits aggregation of misfolded proteins. Negatively regulates the unfolded protein response (UPR) through binding to UPR sensors such as ERN1, which in turn inactivates ERN1 signaling. May also regulate the UPR via the EIF2AK3 UPR sensor. Plays a role in platelet aggregation and activation by agonists such as convulxin, collagen and thrombin. This Homo sapiens (Human) protein is Protein disulfide-isomerase A6 (PDIA6).